Reading from the N-terminus, the 480-residue chain is tRNA-2-methylthio-N(6)-dimethylallyladenosine synthase (480 aa).

The 121-residue stretch at 25–145 (GVFYVHTLGC…LPQLLDQARI (121 aa)) folds into the MTTase N-terminal domain. Cysteine 34, cysteine 74, cysteine 108, cysteine 182, cysteine 186, and cysteine 189 together coordinate [4Fe-4S] cluster. The Radical SAM core domain occupies 168 to 397 (RASKVSSWVA…VALQERITEE (230 aa)). One can recognise a TRAM domain in the interval 400–470 (KTFEGRDVEV…RHNLIADPNP (71 aa)).

The protein belongs to the methylthiotransferase family. MiaB subfamily. Monomer. The cofactor is [4Fe-4S] cluster.

It localises to the cytoplasm. The enzyme catalyses N(6)-dimethylallyladenosine(37) in tRNA + (sulfur carrier)-SH + AH2 + 2 S-adenosyl-L-methionine = 2-methylsulfanyl-N(6)-dimethylallyladenosine(37) in tRNA + (sulfur carrier)-H + 5'-deoxyadenosine + L-methionine + A + S-adenosyl-L-homocysteine + 2 H(+). Its function is as follows. Catalyzes the methylthiolation of N6-(dimethylallyl)adenosine (i(6)A), leading to the formation of 2-methylthio-N6-(dimethylallyl)adenosine (ms(2)i(6)A) at position 37 in tRNAs that read codons beginning with uridine. This chain is tRNA-2-methylthio-N(6)-dimethylallyladenosine synthase, found in Bifidobacterium adolescentis (strain ATCC 15703 / DSM 20083 / NCTC 11814 / E194a).